Consider the following 328-residue polypeptide: Probable GDP-L-fucose synthase 1 (328 aa).

25 to 31 is a binding site for NADP(+); that stretch reads GHRGLVG. Tyrosine 152 serves as the catalytic Proton donor/acceptor. Residues lysine 156, 179-182, and histidine 195 contribute to the NADP(+) site; that span reads PTNL. Substrate contacts are provided by arginine 203, tryptophan 218, arginine 225, and aspartate 285.

The protein belongs to the NAD(P)-dependent epimerase/dehydratase family. Fucose synthase subfamily. In terms of assembly, homodimer.

The enzyme catalyses GDP-beta-L-fucose + NADP(+) = GDP-4-dehydro-alpha-D-rhamnose + NADPH + H(+). It functions in the pathway nucleotide-sugar biosynthesis; GDP-L-fucose biosynthesis via de novo pathway; GDP-L-fucose from GDP-alpha-D-mannose: step 2/2. Its function is as follows. Catalyzes the two-step NADP-dependent conversion of GDP-4-dehydro-6-deoxy-D-mannose to GDP-fucose, involving an epimerase and a reductase reaction. This Oryza sativa subsp. japonica (Rice) protein is Probable GDP-L-fucose synthase 1.